The chain runs to 3704 residues: Fatty acid synthase 2 (3704 aa).

A compositionally biased stretch (low complexity) spans 27-41; that stretch reads AVSAHGSPPSSASPG. Residues 27 to 52 are disordered; the sequence is AVSAHGSPPSSASPGPDDKAFSVDGT. The interval 216-475 is acetyltransferase (AT) domain; sequence ALFGGQGNNH…QARIPFSKRK (260 aa). The segment at 639–887 is enoyl reductase (ER) domain; it reads SRLLGKPPIM…LIASTQGCSD (249 aa). Residues 1216–1709 form a dehydratase (DH) domain region; it reads GEQPSWIRAL…VPGDQLSVQL (494 aa). The MaoC-like domain occupies 1624–1730; the sequence is PKTNEPYSRA…VQIDASNQRG (107 aa). Residues 1747-2112 form a malonyl/palmitoyl transferase (MT/PT) domain region; that stretch reads YVFTGQGSQA…IEHVSEVTRS (366 aa). The Carrier domain maps to 2265–2343; the sequence is DERLDPLLTV…AALRPGYSGE (79 aa). Serine 2303 carries the post-translational modification O-(pantetheine 4'-phosphoryl)serine. The segment at 2733-2969 is ketoreductase (KR) domain; that stretch reads GLDVLLTGVG…LGLVEPEFAS (237 aa). One can recognise a Ketosynthase family 3 (KS3) domain in the interval 3176–3623; it reads QQEIELTHDL…QVGGIAMILH (448 aa). Active-site for beta-ketoacyl synthase activity residues include cysteine 3359, histidine 3506, and histidine 3547.

The protein in the N-terminal section; belongs to the fungal fatty acid synthetase subunit beta family. This sequence in the C-terminal section; belongs to the thiolase-like superfamily. Fungal fatty acid synthetase subunit alpha family.

It functions in the pathway secondary metabolite biosynthesis. Fatty acid synthase; part of the gene cluster that mediates the biosynthesis of the glycolipid biosurfactant ustilagic acid (UA). UA is a secreted cellobiose glycolipid that is toxic for many microorganisms and confers biocontrol activity to U.maydis. UA consists of 15,16-dihydroxypalmitic or 2,15,16-trihydroxypalmitic acid, which is O-glycosidically linked to cellobiose at its terminal hydroxyl group. In addition, the cellobiose moiety is acetylated and acylated with a short-chain hydroxy fatty acid. UA biosynthesis starts with omega-hydroxylation of palmitic acid catalyzed by the cytochrome P450 monooxygenase cyp1. Terminal hydroxylation of palmitic acid precedes subterminal hydroxylation catalyzed by the cytochrome P450 monooxygenase cyp2. Sequential glucosylation of the hydroxy fatty acid is probably catalyzed by the glycosyltransferase ugt1. The cellobiose lipid is further decorated by acetylation of the proximal glucose residue and by acylation with a short-chain beta-hydroxy fatty acid at the distal glucose residue. The acyltransferase uat1 may be a good candidate for catalyzing either acetylation or acylation of the cellobiose lipid. The fatty acid synthase fas2 may be involved in synthesis of the carbon backbone of the short-chain beta-hydroxy fatty acid esterified to the cellobiose disaccharide. The secreted UA consists of a mixture of both alpha-hydroxylated and non-hydroxylated glycolipids; therefore, alpha-hydroxylation of the long-chain fatty, catalyzed by the fatty acid hydroxylase ahd1, occurs late in UA biosynthesis and may be the last step before secretion. The sequence is that of Fatty acid synthase 2 from Mycosarcoma maydis (Corn smut fungus).